Consider the following 137-residue polypeptide: Large ribosomal subunit protein uL16 (137 aa).

The span at 1-17 (MLQPKRTKFRKQQKGRN) shows a compositional bias: basic residues. Residues 1-24 (MLQPKRTKFRKQQKGRNRGLAQSG) form a disordered region.

The protein belongs to the universal ribosomal protein uL16 family. As to quaternary structure, part of the 50S ribosomal subunit.

In terms of biological role, binds 23S rRNA and is also seen to make contacts with the A and possibly P site tRNAs. In Dichelobacter nodosus (strain VCS1703A), this protein is Large ribosomal subunit protein uL16.